Consider the following 186-residue polypeptide: Ribosome-recycling factor (186 aa).

It belongs to the RRF family.

Its subcellular location is the cytoplasm. Responsible for the release of ribosomes from messenger RNA at the termination of protein biosynthesis. May increase the efficiency of translation by recycling ribosomes from one round of translation to another. The protein is Ribosome-recycling factor of Chlorobium chlorochromatii (strain CaD3).